The chain runs to 390 residues: Tryptophan synthase beta chain (390 aa).

The residue at position 90 (Lys-90) is an N6-(pyridoxal phosphate)lysine.

This sequence belongs to the TrpB family. Tetramer of two alpha and two beta chains. The cofactor is pyridoxal 5'-phosphate.

The enzyme catalyses (1S,2R)-1-C-(indol-3-yl)glycerol 3-phosphate + L-serine = D-glyceraldehyde 3-phosphate + L-tryptophan + H2O. It participates in amino-acid biosynthesis; L-tryptophan biosynthesis; L-tryptophan from chorismate: step 5/5. The beta subunit is responsible for the synthesis of L-tryptophan from indole and L-serine. This Bacteroides fragilis (strain ATCC 25285 / DSM 2151 / CCUG 4856 / JCM 11019 / LMG 10263 / NCTC 9343 / Onslow / VPI 2553 / EN-2) protein is Tryptophan synthase beta chain.